We begin with the raw amino-acid sequence, 387 residues long: Alkanesulfonate monooxygenase (387 aa).

The protein belongs to the SsuD family.

The enzyme catalyses an alkanesulfonate + FMNH2 + O2 = an aldehyde + FMN + sulfite + H2O + 2 H(+). Its function is as follows. Catalyzes the desulfonation of aliphatic sulfonates. The chain is Alkanesulfonate monooxygenase from Cupriavidus necator (strain ATCC 17699 / DSM 428 / KCTC 22496 / NCIMB 10442 / H16 / Stanier 337) (Ralstonia eutropha).